The following is a 225-amino-acid chain: Orotate phosphoribosyltransferase (225 aa).

Residue Lys31 participates in 5-phospho-alpha-D-ribose 1-diphosphate binding. 39–40 is an orotate binding site; that stretch reads FF. Residues 78-79, Arg105, Lys106, Lys109, His111, and 130-138 each bind 5-phospho-alpha-D-ribose 1-diphosphate; these read YK and DDVLTSGKA. The orotate site is built by Thr134 and Arg163.

The protein belongs to the purine/pyrimidine phosphoribosyltransferase family. PyrE subfamily. In terms of assembly, homodimer.

It catalyses the reaction orotidine 5'-phosphate + diphosphate = orotate + 5-phospho-alpha-D-ribose 1-diphosphate. The protein operates within pyrimidine metabolism; UMP biosynthesis via de novo pathway; UMP from orotate: step 1/2. Catalyzes the transfer of a ribosyl phosphate group from 5-phosphoribose 1-diphosphate to orotate, leading to the formation of orotidine monophosphate (OMP). In Cryptococcus neoformans var. grubii serotype A (strain H99 / ATCC 208821 / CBS 10515 / FGSC 9487) (Filobasidiella neoformans var. grubii), this protein is Orotate phosphoribosyltransferase (URA5).